We begin with the raw amino-acid sequence, 179 residues long: Large ribosomal subunit protein uL5 (179 aa).

This sequence belongs to the universal ribosomal protein uL5 family. Part of the 50S ribosomal subunit; part of the 5S rRNA/L5/L18/L25 subcomplex. Contacts the 5S rRNA and the P site tRNA. Forms a bridge to the 30S subunit in the 70S ribosome.

In terms of biological role, this is one of the proteins that bind and probably mediate the attachment of the 5S RNA into the large ribosomal subunit, where it forms part of the central protuberance. In the 70S ribosome it contacts protein S13 of the 30S subunit (bridge B1b), connecting the 2 subunits; this bridge is implicated in subunit movement. Contacts the P site tRNA; the 5S rRNA and some of its associated proteins might help stabilize positioning of ribosome-bound tRNAs. The sequence is that of Large ribosomal subunit protein uL5 from Staphylococcus epidermidis (strain ATCC 35984 / DSM 28319 / BCRC 17069 / CCUG 31568 / BM 3577 / RP62A).